A 2097-amino-acid polypeptide reads, in one-letter code: 1-phosphatidylinositol 3-phosphate 5-kinase (2097 aa).

The disordered stretch occupies residues 1 to 44; that stretch reads MATDDKSSPTLDSANDLPRSPASPSHLTHFKPLTPDQDEPPFKS. Ala-2 carries the post-translational modification N-acetylalanine. Ser-23 and Ser-48 each carry phosphoserine; by autocatalysis. The segment at 56–122 is disordered; that stretch reads NKERGEGGQG…AEPACGGHDP (67 aa). Residues 66 to 81 show a composition bias toward low complexity; the sequence is EQQSPSSSWASPQIPS. Residue Ser-88 is modified to Phosphoserine. The segment at 158–218 adopts an FYVE-type zinc-finger fold; it reads DSQCKECYDC…ACTYCRKIAL (61 aa). 8 residues coordinate Zn(2+): Cys-164, Cys-167, Cys-180, Cys-183, Cys-188, Cys-191, Cys-210, and Cys-213. 3 positions are modified to phosphoserine: Ser-299, Ser-307, and Ser-312. Phosphoserine; by PKB/AKT1 or PKB/AKT2 is present on Ser-318. Ser-329 bears the Phosphoserine mark. Residues 365 to 440 form the DEP domain; sequence HTSGMEFQDH…DEYALYRPLQ (76 aa). The segment covering 442 to 459 has biased composition (polar residues); it reads TEFSETPSPDSDSVNSVE. Residues 442 to 469 are disordered; that stretch reads TEFSETPSPDSDSVNSVEGHSEPSWFKD. Residues 460 to 469 are compositionally biased toward basic and acidic residues; sequence GHSEPSWFKD. Ser-475 carries the phosphoserine modification. The segment at 484-505 is disordered; sequence GDDNLANSASPSKRTSVSSFQS. Positions 488 to 505 are enriched in polar residues; it reads LANSASPSKRTSVSSFQS. A chaperonin-like domain region spans residues 616 to 868; that stretch reads MMALLQQLLQ…MICVAYHSQL (253 aa). Disordered regions lie at residues 895-928, 989-1022, 1171-1194, and 1511-1555; these read GRGE…EDST, AVGN…QDDT, HSKD…EERG, and FQQE…HNGE. Over residues 902 to 912 the composition is skewed to polar residues; the sequence is SQEQVSGSSLP. Over residues 1175-1184 the composition is skewed to polar residues; that stretch reads ASCTSGGKSG. The segment covering 1185 to 1194 has biased composition (basic and acidic residues); it reads NKTESDEERG. Phosphoserine is present on residues Ser-1543 and Ser-1548. The residue at position 1668 (Ser-1668) is a Phosphoserine; by autocatalysis. Positions 1697–1742 are disordered; the sequence is EGLPANSALDNRPKSSSPIRLPEISGGQTNRTVEAEPQPTKKASGM. At Ser-1753 the chain carries Phosphoserine. One can recognise a PIPK domain in the interval 1757 to 2083; that stretch reads SSQKRETLRG…RFCEAMDKYF (327 aa). The tract at residues 1781-1800 is disordered; it reads GLESQGLEPQDEVDGGDTQK. Residues 1841–2097 form a catalytic region; it reads EEEFIRSLSH…DHWTGLDLNC (257 aa). Residues Ser-1968 and Ser-2052 each carry the phosphoserine; by autocatalysis modification.

As to quaternary structure, component of the PI(3,5)P2 regulatory complex/PAS complex, at least composed of PIKFYVE, FIG4 and VAC14. VAC14 nucleates the assembly of the complex and serves as a scaffold by pentamerizing into a star-shaped structure, which can bind a single copy each of PIKFYVE and FIG4 and coordinates their activities. Interacts (via chaperonin-like domain) with RABEPK; the interaction recruits RABEPK to the endosomal membrane. Interacts with SPAG9. Interacts with EGFR. Requires Mn(2+) as cofactor. In terms of processing, phosphorylated in response to insulin at Ser-318 in a protein kinase B (PKB)-dependent manner. Autophosphorylates which down-regulates lipid product formation. Autophosphorylates which inhibits its own phosphatidylinositol 3-phosphate 5-kinase activity, stimulates FIG4 lipid phosphatase activity and down-regulates lipid product formation. Dephosphorylated by FIG4 in the PI(3,5)P2 regulatory complex, at Ser-48, Ser-1668 and Ser-2052. Phosphorylated in response to insulin at Ser-318 in a protein kinase B (PKB)-dependent manner. Ubiquitous.

The protein localises to the endosome membrane. It localises to the early endosome membrane. The protein resides in the cytoplasmic vesicle. It is found in the phagosome membrane. Its subcellular location is the late endosome membrane. The catalysed reaction is a 1,2-diacyl-sn-glycero-3-phospho-(1D-myo-inositol-3-phosphate) + ATP = a 1,2-diacyl-sn-glycero-3-phospho-(1D-myo-inositol-3,5-bisphosphate) + ADP + H(+). It carries out the reaction a 1,2-diacyl-sn-glycero-3-phospho-(1D-myo-inositol) + ATP = a 1,2-diacyl-sn-glycero-3-phospho-(1D-myo-inositol-5-phosphate) + ADP + H(+). It catalyses the reaction L-seryl-[protein] + ATP = O-phospho-L-seryl-[protein] + ADP + H(+). Its activity is regulated as follows. Inhibited by apilimod and YM201636. Its function is as follows. Dual specificity kinase implicated in myriad essential cellular processes such as maintenance of endomembrane homeostasis, and endocytic-vacuolar pathway, lysosomal trafficking, nuclear transport, stress- or hormone-induced signaling and cell cycle progression. The PI(3,5)P2 regulatory complex regulates both the synthesis and turnover of phosphatidylinositol 3,5-bisphosphate (PtdIns(3,5)P2). Sole enzyme to catalyze the phosphorylation of phosphatidylinositol 3-phosphate on the fifth hydroxyl of the myo-inositol ring, to form (PtdIns(3,5)P2). Also catalyzes the phosphorylation of phosphatidylinositol on the fifth hydroxyl of the myo-inositol ring, to form phosphatidylinositol 5-phosphate (PtdIns(5)P). Has serine-protein kinase activity and is able to autophosphorylate and transphosphorylate. Autophosphorylation inhibits its own phosphatidylinositol 3-phosphate 5-kinase activity, stimulates FIG4 lipid phosphatase activity and down-regulates lipid product formation. Involved in key endosome operations such as fission and fusion in the course of endosomal cargo transport. Required for the maturation of early into late endosomes, phagosomes and lysosomes. Regulates vacuole maturation and nutrient recovery following engulfment of macromolecules, initiates the redistribution of accumulated lysosomal contents back into the endosome network. Critical regulator of the morphology, degradative activity, and protein turnover of the endolysosomal system in macrophages and platelets. In neutrophils, critical to perform chemotaxis, generate ROS, and undertake phagosome fusion with lysosomes. Plays a key role in the processing and presentation of antigens by major histocompatibility complex class II (MHC class II) mediated by CTSS. Regulates melanosome biogenesis by controlling the delivery of proteins from the endosomal compartment to the melanosome. Essential for systemic glucose homeostasis, mediates insulin-induced signals for endosome/actin remodeling in the course of GLUT4 translocation/glucose uptake activation. Supports microtubule-based endosome-to-trans-Golgi network cargo transport, trhough association with SPAG9 and RABEPK. Mediates EGFR trafficking to the nucleus. This chain is 1-phosphatidylinositol 3-phosphate 5-kinase, found in Mus musculus (Mouse).